Here is a 119-residue protein sequence, read N- to C-terminus: Small ribosomal subunit protein bS16 (119 aa).

Residues 89 to 103 (TTKSTKEKAATDKKA) show a composition bias toward basic and acidic residues. The disordered stretch occupies residues 89 to 119 (TTKSTKEKAATDKKAKVTKKPKTKTTTDVKK).

The protein belongs to the bacterial ribosomal protein bS16 family.

This is Small ribosomal subunit protein bS16 from Spiroplasma kunkelii.